A 1773-amino-acid chain; its full sequence is Disco-interacting protein 2 (1773 aa).

One can recognise a DMAP1-binding domain in the interval 3-110 (HTASLPGYVR…QRHSKKIDFH (108 aa)). Phosphotyrosine occurs at positions 60 and 61. 2 disordered regions span residues 112 to 185 (QAAM…YHSE) and 198 to 319 (LKGR…PLSS). Polar residues-rich tracts occupy residues 113–125 (AAMSLSSAPQSGN) and 146–165 (YQNTREPSAFQNQQSTNNSQ). Basic residues predominate over residues 166–175 (HRQRRTQRKV). A compositionally biased stretch (basic and acidic residues) spans 176–185 (THNEKRYHSE). Over residues 224-236 (DELDSSTDDESIP) the composition is skewed to acidic residues. Positions 241 to 253 (SPDKEYNYPRDHI) are enriched in basic and acidic residues. The segment covering 272–297 (SMGSQQHARTDVKQNQITNQKYTAPN) has biased composition (polar residues).

Belongs to the DIP2 family. As to quaternary structure, interacts with Disco. In terms of tissue distribution, expressed in the developing nervous system. Ubiquitously expressed in the developing brain. Within the mushroom body, a higher level is detected in the core of lobes and peduncle in the late third instar larva. Detected in whole mushroom body neuron structures at 48 hours after puparium formation and during later stages.

Its subcellular location is the cell membrane. Its function is as follows. Required for precise axonal bifurcation in mushroom body neurons by suppressing ectopic bifurcation and regulating the guidance of sister axons. May function by regulating expression of tdp1. Acts downstream of the serine/threonine-protein kinase Bsk to modulate the direction of axon projection. May play a role in fatty acid metabolism. The chain is Disco-interacting protein 2 from Drosophila melanogaster (Fruit fly).